Here is a 159-residue protein sequence, read N- to C-terminus: Protein-export protein SecB (159 aa).

This sequence belongs to the SecB family. Homotetramer, a dimer of dimers. One homotetramer interacts with 1 SecA dimer.

It is found in the cytoplasm. One of the proteins required for the normal export of preproteins out of the cell cytoplasm. It is a molecular chaperone that binds to a subset of precursor proteins, maintaining them in a translocation-competent state. It also specifically binds to its receptor SecA. This chain is Protein-export protein SecB, found in Bartonella bacilliformis (strain ATCC 35685 / KC583 / Herrer 020/F12,63).